A 558-amino-acid chain; its full sequence is Hepatocyte nuclear factor 1-beta (558 aa).

The segment at 1-31 (MVSKLTSLQQELLSALLSSGVTKEVLIQALE) is dimerization. One can recognise an HNF-p1 domain in the interval 1–32 (MVSKLTSLQQELLSALLSSGVTKEVLIQALEE). Phosphoserine is present on residues Ser-49, Ser-52, Ser-75, and Ser-80. The interval 66–85 (TNGHAKGRLSGDEGSEDGDD) is disordered. Residues 93–188 (KELQALNTEE…ILRQFNQTVQ (96 aa)) form the POU-specific atypical domain. The homeobox; HNF1-type DNA-binding region spans 231 to 311 (MRRNRFKWGP…NRRKEEAFRQ (81 aa)). A disordered region spans residues 323–348 (THNLNPLLTHGSPHHQPSSSPPNKMS).

The protein belongs to the HNF1 homeobox family. Binds DNA as a dimer. Can form homodimer or heterodimer with HNF1-alpha. Interacts (via HNF-p1 domain) with PCBD1; the interaction increases its transactivation activity.

It is found in the nucleus. In terms of biological role, transcription factor that binds to the inverted palindrome 5'-GTTAATNATTAAC-3'. Binds to the FPC element in the cAMP regulatory unit of the PLAU gene. Transcriptional activity is increased by coactivator PCBD1. The chain is Hepatocyte nuclear factor 1-beta (Hnf1b) from Mus musculus (Mouse).